The chain runs to 363 residues: NADH-quinone oxidoreductase subunit H (363 aa).

10 helical membrane passes run 29–49 (VLKI…YVVW), 62–82 (GPMY…KLLF), 96–116 (FVIA…VVPF), 127–147 (VGLL…ILAG), 163–183 (AAQV…VMIA), 202–222 (FFDW…VSGV), 238–257 (EIVA…LFFL), 264–286 (ILVS…QGWV), 299–319 (KGGW…YIWF), and 339–359 (FIPL…YGVI).

The protein belongs to the complex I subunit 1 family. In terms of assembly, NDH-1 is composed of 14 different subunits. Subunits NuoA, H, J, K, L, M, N constitute the membrane sector of the complex.

It localises to the cell inner membrane. The catalysed reaction is a quinone + NADH + 5 H(+)(in) = a quinol + NAD(+) + 4 H(+)(out). Its function is as follows. NDH-1 shuttles electrons from NADH, via FMN and iron-sulfur (Fe-S) centers, to quinones in the respiratory chain. The immediate electron acceptor for the enzyme in this species is believed to be ubiquinone. Couples the redox reaction to proton translocation (for every two electrons transferred, four hydrogen ions are translocated across the cytoplasmic membrane), and thus conserves the redox energy in a proton gradient. This subunit may bind ubiquinone. The chain is NADH-quinone oxidoreductase subunit H from Xanthomonas euvesicatoria pv. vesicatoria (strain 85-10) (Xanthomonas campestris pv. vesicatoria).